The sequence spans 550 residues: MRKMVPVVCFATMLLQVAHSAQGRYAQQLLTDLMENYSNALRPVEDTDKALNVTLQITLSQIKDMDERNQVLIAYLWIRQTWHDAYLRWNKEDYDGLEVIRIPSSLVWRPDLVLYNKADDDFSGPLDTNVVLRYNGEITWDAPAITKSSCVVDVSYFPFDSQECNLTFGSWTYNGNQVDIAMGMDSGDLSDFVENVEWECHGMPATKNVIMYGCCSDPYPDITYTVLLQRRSSFYIFNLLLPCFLISFLAPLGFYLPADSGEKVSLGVTVLLALTVFQLMVAESMPPSESVPLIGKYYIATMTMITASTALTIFIMNIHFCGAEAKPVPHWAKVLIIDYMSKIFFVYEVGENCATATSSSSSSSSSSHFGQDDVHQPNFSSHRQANGKPGGNSGRENQYRHKNPRPQTPGPQRHPKPRHQHHITRDEKNHLSSSKYEGFESNRNLPLGDCCKEAPPCCPEDEKTAVVAAAVASVTFGPCVFCSHGSSLPGVDSKLVRNVEYIANCFREQRATCAKGAEWKRVAKVMDRFFMWIFFIMVFLMSILIIGKAP.

The signal sequence occupies residues 1–20; sequence MRKMVPVVCFATMLLQVAHS. Residues 21–233 lie on the Extracellular side of the membrane; sequence AQGRYAQQLL…YTVLLQRRSS (213 aa). Asn-52 carries an N-linked (GlcNAc...) asparagine glycan. Cysteines 150 and 164 form a disulfide. An N-linked (GlcNAc...) asparagine glycan is attached at Asn-165. Residues Cys-214 and Cys-215 are joined by a disulfide bond. A run of 3 helical transmembrane segments spans residues 234 to 254, 264 to 284, and 298 to 318; these read FYIFNLLLPCFLISFLAPLGF, VSLGVTVLLALTVFQLMVAES, and YIATMTMITASTALTIFIMNI. Topologically, residues 319–528 are cytoplasmic; that stretch reads HFCGAEAKPV…WKRVAKVMDR (210 aa). Residues 357–439 form a disordered region; that stretch reads TSSSSSSSSS…HLSSSKYEGF (83 aa). Residues 358–367 show a composition bias toward low complexity; that stretch reads SSSSSSSSSS. The span at 413–422 shows a compositional bias: basic residues; the sequence is RHPKPRHQHH. The chain crosses the membrane as a helical span at residues 529–549; sequence FFMWIFFIMVFLMSILIIGKA.

Belongs to the ligand-gated ion channel (TC 1.A.9) family. Acetylcholine receptor (TC 1.A.9.1) subfamily. Expressed in the brain, liver, olfactory mucosa, pituitary gland and hair cells of the saccule.

The protein resides in the postsynaptic cell membrane. The protein localises to the cell membrane. This is Neuronal acetylcholine receptor subunit alpha-9-II from Oncorhynchus mykiss (Rainbow trout).